Consider the following 137-residue polypeptide: uncharacterized protein (137 aa).

A run of 4 helical transmembrane segments spans residues 14–34 (AVVVAILLYIFIILVVDGSIS), 48–68 (YHIIEFYDFIHIIGFLLSLSI), 84–104 (FFTIFFGITFILGITLFLGLT), and 109–129 (HIPSMRGYTTLMLFFFLLNLF).

Its subcellular location is the cell membrane. This is an uncharacterized protein from Methanocaldococcus jannaschii (strain ATCC 43067 / DSM 2661 / JAL-1 / JCM 10045 / NBRC 100440) (Methanococcus jannaschii).